Here is a 415-residue protein sequence, read N- to C-terminus: Serine hydroxymethyltransferase (415 aa).

(6S)-5,6,7,8-tetrahydrofolate is bound by residues L115 and 119–121; that span reads GHL. An N6-(pyridoxal phosphate)lysine modification is found at K224. 348 to 350 contributes to the (6S)-5,6,7,8-tetrahydrofolate binding site; that stretch reads SPF.

The protein belongs to the SHMT family. As to quaternary structure, homodimer. Pyridoxal 5'-phosphate is required as a cofactor.

Its subcellular location is the cytoplasm. The enzyme catalyses (6R)-5,10-methylene-5,6,7,8-tetrahydrofolate + glycine + H2O = (6S)-5,6,7,8-tetrahydrofolate + L-serine. It functions in the pathway one-carbon metabolism; tetrahydrofolate interconversion. Its pathway is amino-acid biosynthesis; glycine biosynthesis; glycine from L-serine: step 1/1. In terms of biological role, catalyzes the reversible interconversion of serine and glycine with tetrahydrofolate (THF) serving as the one-carbon carrier. This reaction serves as the major source of one-carbon groups required for the biosynthesis of purines, thymidylate, methionine, and other important biomolecules. Also exhibits THF-independent aldolase activity toward beta-hydroxyamino acids, producing glycine and aldehydes, via a retro-aldol mechanism. This Latilactobacillus sakei subsp. sakei (strain 23K) (Lactobacillus sakei subsp. sakei) protein is Serine hydroxymethyltransferase.